Here is a 333-residue protein sequence, read N- to C-terminus: NADH-quinone oxidoreductase subunit H (333 aa).

The next 8 membrane-spanning stretches (helical) occupy residues 17–37 (VIQA…MSFI), 91–111 (VAMA…TLGV), 116–136 (IGLL…LFGG), 156–176 (ISYE…AGSF), 188–208 (MWFI…GVAV), 244–264 (YVNI…GWLA), 272–292 (FIPP…MFVL), and 310–330 (WKVC…VILM).

This sequence belongs to the complex I subunit 1 family. As to quaternary structure, NDH-1 is composed of 14 different subunits. Subunits NuoA, H, J, K, L, M, N constitute the membrane sector of the complex.

It localises to the cell inner membrane. The catalysed reaction is a quinone + NADH + 5 H(+)(in) = a quinol + NAD(+) + 4 H(+)(out). Functionally, NDH-1 shuttles electrons from NADH, via FMN and iron-sulfur (Fe-S) centers, to quinones in the respiratory chain. The immediate electron acceptor for the enzyme in this species is believed to be ubiquinone. Couples the redox reaction to proton translocation (for every two electrons transferred, four hydrogen ions are translocated across the cytoplasmic membrane), and thus conserves the redox energy in a proton gradient. This subunit may bind ubiquinone. This is NADH-quinone oxidoreductase subunit H from Acinetobacter baylyi (strain ATCC 33305 / BD413 / ADP1).